The following is a 434-amino-acid chain: Methylenetetrahydrofolate--tRNA-(uracil-5-)-methyltransferase TrmFO (434 aa).

10-15 (GAGLAG) lines the FAD pocket.

The protein belongs to the MnmG family. TrmFO subfamily. The cofactor is FAD.

It localises to the cytoplasm. The catalysed reaction is uridine(54) in tRNA + (6R)-5,10-methylene-5,6,7,8-tetrahydrofolate + NADH + H(+) = 5-methyluridine(54) in tRNA + (6S)-5,6,7,8-tetrahydrofolate + NAD(+). The enzyme catalyses uridine(54) in tRNA + (6R)-5,10-methylene-5,6,7,8-tetrahydrofolate + NADPH + H(+) = 5-methyluridine(54) in tRNA + (6S)-5,6,7,8-tetrahydrofolate + NADP(+). Functionally, catalyzes the folate-dependent formation of 5-methyl-uridine at position 54 (M-5-U54) in all tRNAs. The polypeptide is Methylenetetrahydrofolate--tRNA-(uracil-5-)-methyltransferase TrmFO (Bacillus cereus (strain AH820)).